A 2727-amino-acid chain; its full sequence is E3 ubiquitin-protein ligase Ufd4 (2727 aa).

2 disordered regions span residues 247-271 and 365-389; these read THSSLTAAGTQPTSSSQPAATTNSD and RGSNNPNQGQLAPRPRRNNTNTDRT. The span at 365-374 shows a compositional bias: polar residues; that stretch reads RGSNNPNQGQ. 3 ANK repeats span residues 422–451, 453–482, and 486–518; these read VGQTLLNWASAFGTLEMVEYLCEKGADVNK, QRSSSLHYAACFGRPAIAKILLKFGAYPDL, and DGKTPLDKARERLDDGHREVAAILQSPGEWMSP. A disordered region spans residues 682-702; it reads AQRSSTSVVVAPRPTSDDPME. Residues 1322-1392 form the MIB/HERC2 domain; it reads QIRAQLKHMT…KYDLKLADCE (71 aa). 2 stretches are compositionally biased toward polar residues: residues 1401–1430 and 1437–1448; these read QSMGSASTAAKPSEKGGNTLTSRKSSSTPS and KNQNPEGASNQT. Disordered stretches follow at residues 1401–1448, 1483–1512, 1570–1592, 1845–1871, 1905–1930, and 2092–2115; these read QSMG…SNQT, NTSSSREARAKHKESGTNQMHKDNISGPSP, ESVTASQSSSHPDVQSSSPREND, YPSLSSNNSENIAPSNPSNTSAGQQSA, ALLGDLDDEDDMDEDNDEEENEDEYE, and STCLESEEFPQTPDVSSKSGASTL. The span at 1575 to 1592 shows a compositional bias: low complexity; that stretch reads SQSSSHPDVQSSSPREND. The segment covering 1909 to 1930 has biased composition (acidic residues); that stretch reads DLDDEDDMDEDNDEEENEDEYE. The span at 2104-2115 shows a compositional bias: polar residues; it reads PDVSSKSGASTL. Residues 2289–2727 enclose the HECT domain; sequence RKSVLEVEFL…ATKEKGFHLN (439 aa). The Glycyl thioester intermediate role is filled by C2696.

The protein belongs to the UPL family. K-HECT subfamily.

The catalysed reaction is S-ubiquitinyl-[E2 ubiquitin-conjugating enzyme]-L-cysteine + [acceptor protein]-L-lysine = [E2 ubiquitin-conjugating enzyme]-L-cysteine + N(6)-ubiquitinyl-[acceptor protein]-L-lysine.. It participates in protein modification; protein ubiquitination. E3 ubiquitin-protein ligase which accepts ubiquitin from an E2 ubiquitin-conjugating enzyme in the form of a thioester and then directly transfers the ubiquitin to targeted substrates. Involved in the negative regulation of the Ras/MAPK signaling pathway in the wing by acting with the E2 enzyme Unc6 and the putative E3 ligases poe and Kcmf1 to mediate the ubiquitination and proteasomal degradation of rl/MAPK. This chain is E3 ubiquitin-protein ligase Ufd4, found in Drosophila melanogaster (Fruit fly).